The chain runs to 364 residues: PHD finger protein 6 (364 aa).

Ser-2 is subject to N-acetylserine. 2 consecutive short sequence motifs (nuclear localization signal) follow at residues 13–16 (RQRK) and 129–133 (RKHKK). Residues 14–52 (QRKCGFCKSNRDKECGQLLISENQKVAAHHKCMLFSSAL) form a C2HC pre-PHD-type 1 zinc finger. The segment at 14-132 (QRKCGFCKSN…IYMVYCRKHK (119 aa)) is extended PHD1 domain (ePHD1). The segment at 80 to 132 (LMCSLCHCPGATIGCDVKTCHRTYHYHCALHDKAQIREKPSQGIYMVYCRKHK) adopts a PHD-type 1 zinc-finger fold. Ser-138, Ser-145, and Ser-155 each carry phosphoserine. The tract at residues 139–211 (EADLEESFNE…RSSPNDTRPK (73 aa)) is disordered. A Nucleolar localization signal motif is present at residues 157–169 (KTKKKSRKGRPRK). Residues 157–171 (KTKKKSRKGRPRKTN) are compositionally biased toward basic residues. Residue Lys-173 forms a Glycyl lysine isopeptide (Lys-Gly) (interchain with G-Cter in SUMO2) linkage. 2 positions are modified to phosphoserine: Ser-183 and Ser-199. A C2HC pre-PHD-type 2 zinc finger spans residues 209-249 (RPKCGFCHVGEEENEARGKLHIFNAKKAAAHYKCMLFSSGT). The tract at residues 209–330 (RPKCGFCHVG…IYKLYCKNHS (122 aa)) is extended PHD2 domain (ePHD2). Lys-227 is covalently cross-linked (Glycyl lysine isopeptide (Lys-Gly) (interchain with G-Cter in SUMO2)). The PHD-type 2 zinc finger occupies 278–330 (MKCTLCSQPGATIGCEIKACVKTYHYHCGVQDKAKYIENMSRGIYKLYCKNHS). The interval 330 to 364 (SGNDERDEEDEERESKSRGRVAIDQQLTQQQLNGN) is disordered. Residues 354-364 (QQLTQQQLNGN) show a composition bias toward polar residues. Residue Thr-357 is modified to Phosphothreonine.

Interacts with UBTF. Interacts with the NuRD complex component RBBP4 (via the nucleolar localization motif), the interaction mediates transcriptional repression activity. In terms of tissue distribution, at 12.5 dpc it is highly expressed in the embryonic central nervous system and at lower levels in other tissues. Very low levels present throughout the adult brain.

The protein localises to the nucleus. It is found in the nucleolus. Its subcellular location is the chromosome. The protein resides in the centromere. It localises to the kinetochore. Functionally, transcriptional regulator that associates with ribosomal RNA promoters and suppresses ribosomal RNA (rRNA) transcription. This chain is PHD finger protein 6 (Phf6), found in Mus musculus (Mouse).